The sequence spans 291 residues: Ribonuclease Z (291 aa).

7 residues coordinate Zn(2+): His-61, His-63, Asp-65, His-66, His-133, Asp-201, and His-257. Asp-65 functions as the Proton acceptor in the catalytic mechanism.

The protein belongs to the RNase Z family. Homodimer. The cofactor is Zn(2+).

It catalyses the reaction Endonucleolytic cleavage of RNA, removing extra 3' nucleotides from tRNA precursor, generating 3' termini of tRNAs. A 3'-hydroxy group is left at the tRNA terminus and a 5'-phosphoryl group is left at the trailer molecule.. Functionally, zinc phosphodiesterase, which displays some tRNA 3'-processing endonuclease activity. Probably involved in tRNA maturation, by removing a 3'-trailer from precursor tRNA. This Saccharolobus islandicus (strain Y.N.15.51 / Yellowstone #2) (Sulfolobus islandicus) protein is Ribonuclease Z.